A 288-amino-acid polypeptide reads, in one-letter code: Keratin-associated protein 5-4 (288 aa).

9 repeat units span residues 49 to 52, 55 to 58, 61 to 64, 201 to 204, 220 to 223, 239 to 242, 249 to 252, 268 to 271, and 278 to 281. A 9 X 4 AA repeats of C-C-X-P region spans residues 49–281; it reads CCVPICCCKP…CCSQSSCCVP (233 aa).

This sequence belongs to the KRTAP type 5 family. As to quaternary structure, interacts with hair keratins. As to expression, restricted to hair root, not detected in any other tissues.

Functionally, in the hair cortex, hair keratin intermediate filaments are embedded in an interfilamentous matrix, consisting of hair keratin-associated protein (KRTAP), which are essential for the formation of a rigid and resistant hair shaft through their extensive disulfide bond cross-linking with abundant cysteine residues of hair keratins. The matrix proteins include the high-sulfur and high-glycine-tyrosine keratins. This is Keratin-associated protein 5-4 (KRTAP5-4) from Homo sapiens (Human).